Reading from the N-terminus, the 388-residue chain is Chorismate synthase (388 aa).

The NADP(+) site is built by arginine 40 and arginine 46. FMN is bound by residues 131–133, 252–253, glycine 296, 311–315, and arginine 337; these read RSS, NA, and KPIPT.

The protein belongs to the chorismate synthase family. Homotetramer. Requires FMNH2 as cofactor.

The catalysed reaction is 5-O-(1-carboxyvinyl)-3-phosphoshikimate = chorismate + phosphate. Its pathway is metabolic intermediate biosynthesis; chorismate biosynthesis; chorismate from D-erythrose 4-phosphate and phosphoenolpyruvate: step 7/7. In terms of biological role, catalyzes the anti-1,4-elimination of the C-3 phosphate and the C-6 proR hydrogen from 5-enolpyruvylshikimate-3-phosphate (EPSP) to yield chorismate, which is the branch point compound that serves as the starting substrate for the three terminal pathways of aromatic amino acid biosynthesis. This reaction introduces a second double bond into the aromatic ring system. The sequence is that of Chorismate synthase from Limosilactobacillus fermentum (strain NBRC 3956 / LMG 18251) (Lactobacillus fermentum).